The following is a 37-amino-acid chain: MPYSLQPQPEGFADVPGFPLCMYMVRGSTWTLVPPDL.

Propeptides lie at residues 1–7 (MPYSLQP) and 18–37 (FPLC…PPDL).

This sequence belongs to the GnRH family. Preoptic area and testis.

It localises to the secreted. Precursor for a gonadotropin regulatory hormone (GNRH) related decapeptide. The sequence is that of Putative preoptic regulatory factor 1 (Porf1) from Rattus norvegicus (Rat).